We begin with the raw amino-acid sequence, 612 residues long: Dihydroxy-acid dehydratase (612 aa).

Residue Asp-81 coordinates Mg(2+). Residue Cys-122 coordinates [2Fe-2S] cluster. Residues Asp-123 and Lys-124 each coordinate Mg(2+). The residue at position 124 (Lys-124) is an N6-carboxylysine. Cys-195 lines the [2Fe-2S] cluster pocket. Glu-491 provides a ligand contact to Mg(2+). Ser-517 (proton acceptor) is an active-site residue.

The protein belongs to the IlvD/Edd family. In terms of assembly, homodimer. The cofactor is [2Fe-2S] cluster. Mg(2+) serves as cofactor.

It catalyses the reaction (2R)-2,3-dihydroxy-3-methylbutanoate = 3-methyl-2-oxobutanoate + H2O. It carries out the reaction (2R,3R)-2,3-dihydroxy-3-methylpentanoate = (S)-3-methyl-2-oxopentanoate + H2O. Its pathway is amino-acid biosynthesis; L-isoleucine biosynthesis; L-isoleucine from 2-oxobutanoate: step 3/4. It functions in the pathway amino-acid biosynthesis; L-valine biosynthesis; L-valine from pyruvate: step 3/4. Its function is as follows. Functions in the biosynthesis of branched-chain amino acids. Catalyzes the dehydration of (2R,3R)-2,3-dihydroxy-3-methylpentanoate (2,3-dihydroxy-3-methylvalerate) into 2-oxo-3-methylpentanoate (2-oxo-3-methylvalerate) and of (2R)-2,3-dihydroxy-3-methylbutanoate (2,3-dihydroxyisovalerate) into 2-oxo-3-methylbutanoate (2-oxoisovalerate), the penultimate precursor to L-isoleucine and L-valine, respectively. This is Dihydroxy-acid dehydratase from Rhizobium johnstonii (strain DSM 114642 / LMG 32736 / 3841) (Rhizobium leguminosarum bv. viciae).